A 718-amino-acid chain; its full sequence is Homeobox-leucine zipper protein HDG9 (718 aa).

Residues 1–12 (MDFTRDDNSSDE) are compositionally biased toward basic and acidic residues. The tract at residues 1 to 35 (MDFTRDDNSSDERENDVDANTNNRHEKKGYHRHTN) is disordered. Positions 26–85 (EKKGYHRHTNEQIHRLETYFKECPHPDEFQRRLLGEELNLKPKQIKFWFQNKRTQAKSHN) form a DNA-binding region, homeobox. A coiled-coil region spans residues 78–152 (RTQAKSHNEK…LKDEYERVSN (75 aa)). The tract at residues 169 to 209 (PYLHGPSNHASTSKNRPALYGTSSNRLPEPSSIFRGPYTRG) is disordered. Over residues 176-194 (NHASTSKNRPALYGTSSNR) the composition is skewed to polar residues. The region spanning 232-464 (SQLEKIAMLE…LERTCERLIF (233 aa)) is the START domain.

This sequence belongs to the HD-ZIP homeobox family. Class IV subfamily. In terms of tissue distribution, expressed in anthers with highest levels in the tapetum and pollen grains, and chalazal end of the embryo sac.

The protein localises to the nucleus. Functionally, probable transcription factor that binds to the DNA sequence 5'-GCATTAAATGCGCA-3'. The chain is Homeobox-leucine zipper protein HDG9 (HDG9) from Arabidopsis thaliana (Mouse-ear cress).